Consider the following 216-residue polypeptide: Fucoxanthin-chlorophyll a-c binding protein C, chloroplastic (216 aa).

The N-terminal 38 residues, 1 to 38 (MKSAIMAVASAAPGLRGPSAFNGAALTTSAKSSSAMKM), are a transit peptide targeting the chloroplast. 3 consecutive transmembrane segments (helical) span residues 80–100 (IAML…PGML), 121–141 (IPPG…LAVM), and 182–202 (GRAA…NNKP).

This sequence belongs to the fucoxanthin chlorophyll protein family. In terms of assembly, the LHC complex of chromophytic algae is composed of fucoxanthin, chlorophyll A and C bound non-covalently by fucoxanthin chlorophyll proteins (FCPs). The ratio of pigments in this LHC is; fucoxanthin: chlorophyll C: chlorophyll A; (0.6-1): (0.1-0.3): (1).

It is found in the plastid. It localises to the chloroplast thylakoid membrane. The light-harvesting complex (LHC) functions as a light receptor, it captures and delivers excitation energy to photosystems with which it is closely associated. Energy is transferred from the carotenoid and chlorophyll C (or B) to chlorophyll A and the photosynthetic reaction centers where it is used to synthesize ATP and reducing power. This is Fucoxanthin-chlorophyll a-c binding protein C, chloroplastic (FCPC) from Macrocystis pyrifera (Giant kelp).